The chain runs to 880 residues: Guanine nucleotide-binding protein subunit beta 2 (880 aa).

Ser24 carries the post-translational modification Phosphoserine. Kelch repeat units follow at residues 291-339 (NIYI…MVNN), 377-425 (HIFF…KIDI), and 501-552 (TVII…LTPS). A disordered region spans residues 624–649 (FNSGSAAQESPKAGASASSASAASFD). Positions 638–647 (ASASSASAAS) are enriched in low complexity. Residues 691-738 (TVVLHGGSNGLNVLDDMWLMDLECETWTPIETFAKADSSEDGDEKLDS) form a Kelch 4 repeat.

In terms of assembly, g proteins are composed of 3 units, alpha, beta and gamma. GPB1 interacts with the alpha subunit GPA2.

Its subcellular location is the cytoplasm. It is found in the mitochondrion. Beta subunit of a guanine nucleotide-binding protein (G protein). G proteins are involved as modulators or transducers in various transmembrane signaling systems. The beta and gamma chains are required for the GTPase activity, for replacement of GDP by GTP, and for G protein-effector interaction. Involved in the determination of the cAMP level according to nutritional conditions, most probably as a regulator of cAMP phosphodiesterase. Required for the control of pseudohyphal and haploid invasive growth. This is Guanine nucleotide-binding protein subunit beta 2 (GPB2) from Saccharomyces cerevisiae (strain ATCC 204508 / S288c) (Baker's yeast).